A 237-amino-acid polypeptide reads, in one-letter code: tRNA (guanine-N(7)-)-methyltransferase (237 aa).

Residues E67, E92, D119, and D142 each coordinate S-adenosyl-L-methionine. The active site involves D142. Substrate contacts are provided by residues K146, D178, and 215–218; that span reads TKFE.

Belongs to the class I-like SAM-binding methyltransferase superfamily. TrmB family.

The catalysed reaction is guanosine(46) in tRNA + S-adenosyl-L-methionine = N(7)-methylguanosine(46) in tRNA + S-adenosyl-L-homocysteine. Its pathway is tRNA modification; N(7)-methylguanine-tRNA biosynthesis. In terms of biological role, catalyzes the formation of N(7)-methylguanine at position 46 (m7G46) in tRNA. The polypeptide is tRNA (guanine-N(7)-)-methyltransferase (Aeromonas hydrophila subsp. hydrophila (strain ATCC 7966 / DSM 30187 / BCRC 13018 / CCUG 14551 / JCM 1027 / KCTC 2358 / NCIMB 9240 / NCTC 8049)).